The primary structure comprises 471 residues: Cysteine--tRNA ligase (471 aa).

Zn(2+) is bound at residue cysteine 29. The 'HIGH' region signature appears at 31-41 (PTVYNYIHIGN). Positions 209, 234, and 238 each coordinate Zn(2+). A 'KMSKS' region motif is present at residues 266 to 270 (KMSKS). Lysine 269 is a binding site for ATP.

Belongs to the class-I aminoacyl-tRNA synthetase family. Monomer. Zn(2+) is required as a cofactor.

It localises to the cytoplasm. The catalysed reaction is tRNA(Cys) + L-cysteine + ATP = L-cysteinyl-tRNA(Cys) + AMP + diphosphate. In Listeria innocua serovar 6a (strain ATCC BAA-680 / CLIP 11262), this protein is Cysteine--tRNA ligase.